The following is a 477-amino-acid chain: Methylenetetrahydrofolate--tRNA-(uracil-5-)-methyltransferase TrmFO (477 aa).

14 to 19 lines the FAD pocket; that stretch reads GGGLAG.

The protein belongs to the MnmG family. TrmFO subfamily. FAD is required as a cofactor.

It is found in the cytoplasm. The enzyme catalyses uridine(54) in tRNA + (6R)-5,10-methylene-5,6,7,8-tetrahydrofolate + NADH + H(+) = 5-methyluridine(54) in tRNA + (6S)-5,6,7,8-tetrahydrofolate + NAD(+). It carries out the reaction uridine(54) in tRNA + (6R)-5,10-methylene-5,6,7,8-tetrahydrofolate + NADPH + H(+) = 5-methyluridine(54) in tRNA + (6S)-5,6,7,8-tetrahydrofolate + NADP(+). Its function is as follows. Catalyzes the folate-dependent formation of 5-methyl-uridine at position 54 (M-5-U54) in all tRNAs. In Rhizobium etli (strain ATCC 51251 / DSM 11541 / JCM 21823 / NBRC 15573 / CFN 42), this protein is Methylenetetrahydrofolate--tRNA-(uracil-5-)-methyltransferase TrmFO.